A 37-amino-acid polypeptide reads, in one-letter code: Large ribosomal subunit protein bL36 (37 aa).

The protein belongs to the bacterial ribosomal protein bL36 family.

This Janthinobacterium sp. (strain Marseille) (Minibacterium massiliensis) protein is Large ribosomal subunit protein bL36.